The sequence spans 374 residues: uncharacterized protein (374 aa).

A divalent metal cation-binding residues include D158, H160, D190, N221, H312, and H314.

The protein belongs to the metallophosphoesterase superfamily. The cofactor is a divalent metal cation.

This is an uncharacterized protein from Campylobacter jejuni subsp. jejuni serotype O:2 (strain ATCC 700819 / NCTC 11168).